We begin with the raw amino-acid sequence, 555 residues long: Glutamate--tRNA ligase (555 aa).

Positions 100 to 110 match the 'HIGH' region motif; the sequence is PNPSGPLHIGH.

It belongs to the class-I aminoacyl-tRNA synthetase family. Glutamate--tRNA ligase type 2 subfamily.

The protein resides in the cytoplasm. The enzyme catalyses tRNA(Glu) + L-glutamate + ATP = L-glutamyl-tRNA(Glu) + AMP + diphosphate. In terms of biological role, catalyzes the attachment of glutamate to tRNA(Glu) in a two-step reaction: glutamate is first activated by ATP to form Glu-AMP and then transferred to the acceptor end of tRNA(Glu). The sequence is that of Glutamate--tRNA ligase from Methanococcus maripaludis (strain C5 / ATCC BAA-1333).